Consider the following 231-residue polypeptide: Small ribosomal subunit protein uS3 (231 aa).

Residues 18-97 enclose the KH type-2 domain; that stretch reads VDEYLAKQFY…NPELNARVMA (80 aa).

The protein belongs to the universal ribosomal protein uS3 family. Part of the 30S ribosomal subunit.

In terms of biological role, binds the lower part of the 30S subunit head. The chain is Small ribosomal subunit protein uS3 from Sulfolobus acidocaldarius (strain ATCC 33909 / DSM 639 / JCM 8929 / NBRC 15157 / NCIMB 11770).